The primary structure comprises 408 residues: Succinylornithine transaminase (408 aa).

Lys-252 is modified (N6-(pyridoxal phosphate)lysine).

Belongs to the class-III pyridoxal-phosphate-dependent aminotransferase family. AstC subfamily. The cofactor is pyridoxal 5'-phosphate.

It catalyses the reaction N(2)-succinyl-L-ornithine + 2-oxoglutarate = N-succinyl-L-glutamate 5-semialdehyde + L-glutamate. It participates in amino-acid degradation; L-arginine degradation via AST pathway; L-glutamate and succinate from L-arginine: step 3/5. In terms of biological role, catalyzes the transamination of N(2)-succinylornithine and alpha-ketoglutarate into N(2)-succinylglutamate semialdehyde and glutamate. Can also act as an acetylornithine aminotransferase. The chain is Succinylornithine transaminase from Salmonella paratyphi A (strain ATCC 9150 / SARB42).